The following is a 90-amino-acid chain: Probable Fe(2+)-trafficking protein (90 aa).

It belongs to the Fe(2+)-trafficking protein family. As to quaternary structure, monomer.

In terms of biological role, could be a mediator in iron transactions between iron acquisition and iron-requiring processes, such as synthesis and/or repair of Fe-S clusters in biosynthetic enzymes. The sequence is that of Probable Fe(2+)-trafficking protein from Pectobacterium atrosepticum (strain SCRI 1043 / ATCC BAA-672) (Erwinia carotovora subsp. atroseptica).